Here is a 25-residue protein sequence, read N- to C-terminus: Bifunctional chitinase/lysozyme (25 aa).

It belongs to the glycosyl hydrolase 19 family. Chitinase class I subfamily. As to quaternary structure, monomer.

The protein localises to the secreted. Its subcellular location is the extracellular space. It carries out the reaction Random endo-hydrolysis of N-acetyl-beta-D-glucosaminide (1-&gt;4)-beta-linkages in chitin and chitodextrins.. The enzyme catalyses Hydrolysis of (1-&gt;4)-beta-linkages between N-acetylmuramic acid and N-acetyl-D-glucosamine residues in a peptidoglycan and between N-acetyl-D-glucosamine residues in chitodextrins.. Functionally, bifunctional enzyme with lysozyme/chitinase activity. The protein is Bifunctional chitinase/lysozyme of Carica papaya (Papaya).